The following is a 389-amino-acid chain: Lipid-A-disaccharide synthase (389 aa).

The protein belongs to the LpxB family.

The enzyme catalyses a lipid X + a UDP-2-N,3-O-bis[(3R)-3-hydroxyacyl]-alpha-D-glucosamine = a lipid A disaccharide + UDP + H(+). It functions in the pathway bacterial outer membrane biogenesis; LPS lipid A biosynthesis. Functionally, condensation of UDP-2,3-diacylglucosamine and 2,3-diacylglucosamine-1-phosphate to form lipid A disaccharide, a precursor of lipid A, a phosphorylated glycolipid that anchors the lipopolysaccharide to the outer membrane of the cell. The protein is Lipid-A-disaccharide synthase of Burkholderia ambifaria (strain MC40-6).